A 314-amino-acid polypeptide reads, in one-letter code: MTMTDTTQQDKKHTYNFNKLQKRLRRNVGNAIADFNMIEEGDKVMVCLSGGKDSYTLLDILLNLRLNAPIHFEIVAVNLDQKQPGFPEHILPEYLQSIGVDYKIVEENTYGIVKEKIPEGKTTCSLCSRLRRGILYRTATELGATKIALGHHRDDMLETLFLNMFYGGKLKSMPPKLISDDGKQIVIRPLAYCKEKDIEKYAQAKHFPIIPCNLCGSQPNLQRQVVKEMLQKWDRQYPGRIETMFSAIQNIVPSHLCDTHLFNFKDLQRGQILENIEGDIAFDKPEFIATSPIDDDDEQQDFHQVELINVKEIH.

Residues 49 to 54 (SGGKDS) carry the PP-loop motif motif. [4Fe-4S] cluster is bound by residues Cys124, Cys127, and Cys215.

It belongs to the TtcA family. In terms of assembly, homodimer. Mg(2+) serves as cofactor. Requires [4Fe-4S] cluster as cofactor.

The protein resides in the cytoplasm. The catalysed reaction is cytidine(32) in tRNA + S-sulfanyl-L-cysteinyl-[cysteine desulfurase] + AH2 + ATP = 2-thiocytidine(32) in tRNA + L-cysteinyl-[cysteine desulfurase] + A + AMP + diphosphate + H(+). The protein operates within tRNA modification. Functionally, catalyzes the ATP-dependent 2-thiolation of cytidine in position 32 of tRNA, to form 2-thiocytidine (s(2)C32). The sulfur atoms are provided by the cysteine/cysteine desulfurase (IscS) system. The protein is tRNA-cytidine(32) 2-sulfurtransferase of Pasteurella multocida (strain Pm70).